The following is a 203-amino-acid chain: Enterotoxin-like toxin X (203 aa).

The tract at residues 164–180 (YTLESHKELQKNRENVE) is sialic acid-binding motif.

The protein belongs to the staphylococcal/streptococcal toxin family.

Its subcellular location is the secreted. In terms of biological role, plays a role in the inhibition of the host innate immune system. Inhibits phagocytosis and killing by human neutrophils by interacting with multiple neutrophil surface glycoproteins in a sialic acid-dependent manner. The polypeptide is Enterotoxin-like toxin X (Staphylococcus aureus).